Here is an 85-residue protein sequence, read N- to C-terminus: Dynein light chain 1, cytoplasmic (85 aa).

It belongs to the dynein light chain family. As to quaternary structure, homodimer. Cytoplasmic dynein consists of two catalytic heavy chains (HCs) and a number of non-catalytic subunits which present intermediate chains (ICs), light intermediate chains (LICs) and light chains (LCs). Component of the nuclear pore complex (NPC). NPC constitutes the exclusive means of nucleocytoplasmic transport. NPCs allow the passive diffusion of ions and small molecules and the active, nuclear transport receptor-mediated bidirectional transport of macromolecules such as proteins, RNAs, ribonucleoparticles (RNPs), and ribosomal subunits across the nuclear envelope. Due to its 8-fold rotational symmetry, all subunits are present with 8 copies or multiples thereof.

It localises to the cytoplasm. The protein localises to the cytoskeleton. The protein resides in the nucleus. Its subcellular location is the nuclear pore complex. Its function is as follows. Acts as one of several non-catalytic accessory components of the cytoplasmic dynein complex that are thought to be involved in linking dynein to cargos and to adapter proteins that regulate dynein function. Cytoplasmic dynein 1 acts as a motor for the intracellular retrograde motility of vesicles and organelles along microtubules. May play a role in changing or maintaining the spatial distribution of cytoskeletal structures. Also a component of the nuclear pore complex. This is Dynein light chain 1, cytoplasmic (dlc2) from Schizosaccharomyces pombe (strain 972 / ATCC 24843) (Fission yeast).